The chain runs to 315 residues: Methionyl-tRNA formyltransferase (315 aa).

A (6S)-5,6,7,8-tetrahydrofolate-binding site is contributed by 113-116; sequence SLLP.

The protein belongs to the Fmt family.

The catalysed reaction is L-methionyl-tRNA(fMet) + (6R)-10-formyltetrahydrofolate = N-formyl-L-methionyl-tRNA(fMet) + (6S)-5,6,7,8-tetrahydrofolate + H(+). Attaches a formyl group to the free amino group of methionyl-tRNA(fMet). The formyl group appears to play a dual role in the initiator identity of N-formylmethionyl-tRNA by promoting its recognition by IF2 and preventing the misappropriation of this tRNA by the elongation apparatus. This is Methionyl-tRNA formyltransferase from Salmonella enteritidis PT4 (strain P125109).